The sequence spans 92 residues: Small ribosomal subunit protein uS19 (92 aa).

Belongs to the universal ribosomal protein uS19 family.

Protein S19 forms a complex with S13 that binds strongly to the 16S ribosomal RNA. This Nitrobacter hamburgensis (strain DSM 10229 / NCIMB 13809 / X14) protein is Small ribosomal subunit protein uS19.